The following is a 282-amino-acid chain: Pantothenate synthetase (282 aa).

Residue 31 to 38 coordinates ATP; the sequence is MGALHDGH. Catalysis depends on H38, which acts as the Proton donor. Q62 is a binding site for (R)-pantoate. Q62 contacts beta-alanine. Residue 148-151 coordinates ATP; that stretch reads GKKD. Q154 is a binding site for (R)-pantoate. ATP contacts are provided by residues V177 and 185–188; that span reads KSSR.

The protein belongs to the pantothenate synthetase family. As to quaternary structure, homodimer.

It is found in the cytoplasm. It carries out the reaction (R)-pantoate + beta-alanine + ATP = (R)-pantothenate + AMP + diphosphate + H(+). It participates in cofactor biosynthesis; (R)-pantothenate biosynthesis; (R)-pantothenate from (R)-pantoate and beta-alanine: step 1/1. Catalyzes the condensation of pantoate with beta-alanine in an ATP-dependent reaction via a pantoyl-adenylate intermediate. This is Pantothenate synthetase from Staphylococcus saprophyticus subsp. saprophyticus (strain ATCC 15305 / DSM 20229 / NCIMB 8711 / NCTC 7292 / S-41).